We begin with the raw amino-acid sequence, 132 residues long: Interleukin-5 (132 aa).

Residues 1 to 17 (MRLPLQLSILTLAWVWA) form the signal peptide. Residues N45, N74, and N88 are each glycosylated (N-linked (GlcNAc...) asparagine).

This sequence belongs to the IL-5 family. Homodimer; disulfide-linked. Interacts with IL5RA. Interacts with CSF2RB.

The protein resides in the secreted. Its function is as follows. Homodimeric cytokine expressed predominantly by T-lymphocytes and NK cells that plays an important role in the survival, differentiation, and chemotaxis of eosinophils. Also acts on activated and resting B-cells to induce immunoglobulin production, growth, and differentiation. Mechanistically, exerts its biological effects through a receptor composed of IL5RA subunit and the cytokine receptor common subunit beta/CSF2RB. Binding to the receptor leads to activation of various kinases including LYN, SYK and JAK2 and thereby propagates signals through the RAS-MAPK and JAK-STAT5 pathways respectively. The chain is Interleukin-5 (IL5) from Meriones unguiculatus (Mongolian jird).